Consider the following 510-residue polypeptide: Probable cytochrome P450 4d20 (510 aa).

Residue C455 coordinates heme.

It belongs to the cytochrome P450 family. Heme is required as a cofactor.

The protein resides in the endoplasmic reticulum membrane. The protein localises to the microsome membrane. Functionally, may be involved in the metabolism of insect hormones and in the breakdown of synthetic insecticides. The polypeptide is Probable cytochrome P450 4d20 (Cyp4d20) (Drosophila melanogaster (Fruit fly)).